A 169-amino-acid polypeptide reads, in one-letter code: Putative esterase F42H10.6 (169 aa).

The protein belongs to the thioesterase paaI family.

The protein is Putative esterase F42H10.6 of Caenorhabditis elegans.